Reading from the N-terminus, the 183-residue chain is Translation initiation factor IF-3 (183 aa).

The protein belongs to the IF-3 family. Monomer.

Its subcellular location is the cytoplasm. Its function is as follows. IF-3 binds to the 30S ribosomal subunit and shifts the equilibrium between 70S ribosomes and their 50S and 30S subunits in favor of the free subunits, thus enhancing the availability of 30S subunits on which protein synthesis initiation begins. In Azobacteroides pseudotrichonymphae genomovar. CFP2, this protein is Translation initiation factor IF-3.